A 948-amino-acid chain; its full sequence is MATEFSWDEIKKENVDLERIPVEEVFEQLKCSKEGLSSDEGAKRLEIFGANKLEEKSENKFLKFLGFMWNPLSWVMESAAIMAIVLANGGGKAPDWQDFIGIMVLLIINSTISFIEENNAGNAAAALMANLAPKTKVLRDGKWGEQEASILVPGDLISIKLGDIVPADARLLEGDPLKIDQSALTGESLPTTKHPGDEVFSGSTCKQGEIEAVVIATGVHTFFGKAAHLVDSTNNVGHFQKVLTSIGNFCICSIGLGMLIEILIMYPIQHRTYRDGIDNLLVLLIGGIPIAMPTVLSVTMAIGSHRLSQQGAITKRMTAIEEMAGMDVLCSDKTGTLTLNKLSVDKSLIEVFPKNMDSDSVVLMAARASRIENQDAIDASIVGMLGDPKEARAGITEVHFLPFNPVDKRTAITYIDESGDWHRSSKGAPEQIIELCNLQGETKRKAHEVIDGFAERGLRSLGVAQQTVPEKTKESDGSPWEFVGLLPLFDPPRHDSAETIRRALELGVNVKMITGDQLAIGIETGRRLGMGTNMYPSTSLLGNSKDESLVGIPIDELIEKADGFAGVFPEHKYEIVKKLQERKHICGMTGDGVNDAPALKKADIGIAVADATDAARSASDIVLTEPGLSVIISAVLTSRAIFQRMKNYTIYAVSITIRIVLGFMLVALIWRFDFAPFMVLIIAILNDGTIMTISKDRVKPSPVPDSWKLNEIFATGVVLGTYMALTTVLFFWLAHDTDFFSKTFGVRSIQGNEEELMAALYLQVSIISQALIFVTRSRSWSFVERPGFLLLIAFVIAQLVATLIAVYANWGFARIVGCGWGWAGGIWVYSIITYIPLDILKFIIRYALTGKAWDNMINQKTAFTTKKDYGKGEREAQWALAQRTLHGLPPPEAMFNDNKNELSEIAEQAKRRAEVARLRELHTLKGHVESVVKLKGLDIDTIQQHYTV.

The Cytoplasmic segment spans residues 1–64 (MATEFSWDEI…EKSENKFLKF (64 aa)). Residues 65–84 (LGFMWNPLSWVMESAAIMAI) traverse the membrane as a helical segment. Residues 85 to 96 (VLANGGGKAPDW) are Extracellular-facing. The chain crosses the membrane as a helical span at residues 97-117 (QDFIGIMVLLIINSTISFIEE). Residues 118 to 246 (NNAGNAAAAL…GHFQKVLTSI (129 aa)) lie on the Cytoplasmic side of the membrane. Residues 247-267 (GNFCICSIGLGMLIEILIMYP) traverse the membrane as a helical segment. Over 268–276 (IQHRTYRDG) the chain is Extracellular. A helical transmembrane segment spans residues 277-294 (IDNLLVLLIGGIPIAMPT). Over 295 to 646 (VLSVTMAIGS…TSRAIFQRMK (352 aa)) the chain is Cytoplasmic. D332 serves as the catalytic 4-aspartylphosphate intermediate. Mg(2+) contacts are provided by D591 and D595. A helical transmembrane segment spans residues 647–668 (NYTIYAVSITIRIVLGFMLVAL). Residues 669 to 673 (IWRFD) are Extracellular-facing. The helical transmembrane segment at 674–696 (FAPFMVLIIAILNDGTIMTISKD) threads the bilayer. The Cytoplasmic segment spans residues 697–712 (RVKPSPVPDSWKLNEI). A helical membrane pass occupies residues 713-733 (FATGVVLGTYMALTTVLFFWL). Over 734 to 754 (AHDTDFFSKTFGVRSIQGNEE) the chain is Extracellular. A helical transmembrane segment spans residues 755–775 (ELMAALYLQVSIISQALIFVT). Residues 776–787 (RSRSWSFVERPG) are Cytoplasmic-facing. A helical transmembrane segment spans residues 788 to 808 (FLLLIAFVIAQLVATLIAVYA). Topologically, residues 809-816 (NWGFARIV) are extracellular. The chain crosses the membrane as a helical span at residues 817-837 (GCGWGWAGGIWVYSIITYIPL). The Cytoplasmic segment spans residues 838–948 (DILKFIIRYA…IDTIQQHYTV (111 aa)). At T884 the chain carries Phosphothreonine. Phosphoserine is present on S930. Residues 946 to 948 (YTV) are interaction with 14-3-3 proteins. The residue at position 947 (T947) is a Phosphothreonine.

The protein belongs to the cation transport ATPase (P-type) (TC 3.A.3) family. Type IIIA subfamily. As to quaternary structure, binds to 14-3-3 proteins. The binding is induced by phosphorylation of Thr-947. Binding to 14-3-3 proteins activates the H(+)-ATPase. As to expression, expressed in guard cells, roots and leaves, and barely in mesophyll cells.

Its subcellular location is the membrane. The enzyme catalyses ATP + H2O + H(+)(in) = ADP + phosphate + 2 H(+)(out). The plasma membrane H(+) ATPase of plants and fungi generates a proton gradient that drives the active transport of nutrients by H(+)-symport. The resulting external acidification and/or internal alkinization may mediate growth responses. The chain is ATPase 8, plasma membrane-type (AHA8) from Arabidopsis thaliana (Mouse-ear cress).